The chain runs to 394 residues: Chorismate synthase (394 aa).

R40 and R46 together coordinate NADP(+). FMN-binding positions include 135–137 (RAS), 255–256 (QA), G302, 317–321 (KPISS), and R343.

This sequence belongs to the chorismate synthase family. In terms of assembly, homotetramer. The cofactor is FMNH2.

It carries out the reaction 5-O-(1-carboxyvinyl)-3-phosphoshikimate = chorismate + phosphate. Its pathway is metabolic intermediate biosynthesis; chorismate biosynthesis; chorismate from D-erythrose 4-phosphate and phosphoenolpyruvate: step 7/7. In terms of biological role, catalyzes the anti-1,4-elimination of the C-3 phosphate and the C-6 proR hydrogen from 5-enolpyruvylshikimate-3-phosphate (EPSP) to yield chorismate, which is the branch point compound that serves as the starting substrate for the three terminal pathways of aromatic amino acid biosynthesis. This reaction introduces a second double bond into the aromatic ring system. This is Chorismate synthase from Parafrankia sp. (strain EAN1pec).